The sequence spans 363 residues: Ribosome-binding ATPase YchF (363 aa).

The region spanning 3-256 is the OBG-type G domain; the sequence is FKCGIVGLPN…LDDEEKVEFL (254 aa). An ATP-binding site is contributed by 12–17; that stretch reads NVGKST. Mg(2+)-binding residues include Ser-16 and Thr-36. Positions 278 to 361 constitute a TGS domain; sequence NLQTYFTAGV…QDGDVMHFRF (84 aa).

Mg(2+) serves as cofactor.

Functionally, ATPase that binds to both the 70S ribosome and the 50S ribosomal subunit in a nucleotide-independent manner. Does not hydrolyze GTP. The sequence is that of Ribosome-binding ATPase YchF from Haemophilus influenzae (strain ATCC 51907 / DSM 11121 / KW20 / Rd).